Reading from the N-terminus, the 636-residue chain is Chaperone protein DnaK2 (636 aa).

At Thr-198 the chain carries Phosphothreonine; by autocatalysis. A compositionally biased stretch (low complexity) spans 604 to 618 (EAGVGAPGAGPEAGT). A disordered region spans residues 604-636 (EAGVGAPGAGPEAGTSSGGGDDVIDAEFSEPEK). A compositionally biased stretch (acidic residues) spans 625-636 (DVIDAEFSEPEK).

Belongs to the heat shock protein 70 family.

Functionally, acts as a chaperone. In Synechocystis sp. (strain ATCC 27184 / PCC 6803 / Kazusa), this protein is Chaperone protein DnaK2 (dnaK2).